We begin with the raw amino-acid sequence, 94 residues long: Antifungal protein (94 aa).

Residues 1–21 (MKFVSLASLGFALVAALGAVA) form the signal peptide. Residues 22–43 (TPVEADSLTAGGLDARDESAVL) constitute a propeptide that is removed on maturation. 4 cysteine pairs are disulfide-bonded: Cys-50–Cys-76, Cys-57–Cys-83, Cys-69–Cys-71, and Cys-92–Cys-94.

The protein belongs to the antifungal protein pafB family.

The protein localises to the secreted. It is found in the host cytoplasm. In terms of biological role, antifungal protein that acts as an inhibitor of growth of a variety of fungal species. In Aspergillus giganteus, this protein is Antifungal protein (afp).